The sequence spans 273 residues: MPLSTSLLGKKSTYKDSYDATLLFKIPRINNRNELGINSNNLPFYGVDIWNTYELSCLNKNGKPWVGVGTFYIPTDSENIVESKSFKLYLNSFNNFVVESVEELERIILQDLSNVTHAKVTGRIFPINTKIEFSIPSGKNIDDLDIVCNNYGPPDNSLIEYEDVLVEEEINSNLLKSNCLVTGQPDWGTIVIKYKGKKLKHDSFLKYLISFRNCNEFAEQCAERIFTDIKNAINPDFLSIYIVYTRRGGIDICPYRFTNKSYTLPSDKRFIRQ.

Val-81–Ser-83 is a substrate binding site. Ser-83 to Lys-84 lines the NADPH pocket. The active-site Thioimide intermediate is Cys-179. The active-site Proton donor is Asp-186. Residue Ala-218–Glu-219 coordinates substrate. Residue Arg-247–Gly-248 participates in NADPH binding.

It belongs to the GTP cyclohydrolase I family. QueF type 2 subfamily. In terms of assembly, homodimer.

The protein resides in the cytoplasm. It carries out the reaction 7-aminomethyl-7-carbaguanine + 2 NADP(+) = 7-cyano-7-deazaguanine + 2 NADPH + 3 H(+). It participates in tRNA modification; tRNA-queuosine biosynthesis. Catalyzes the NADPH-dependent reduction of 7-cyano-7-deazaguanine (preQ0) to 7-aminomethyl-7-deazaguanine (preQ1). This Rickettsia felis (strain ATCC VR-1525 / URRWXCal2) (Rickettsia azadi) protein is NADPH-dependent 7-cyano-7-deazaguanine reductase.